We begin with the raw amino-acid sequence, 339 residues long: Methionyl-tRNA formyltransferase (339 aa).

110–113 is a binding site for (6S)-5,6,7,8-tetrahydrofolate; it reads SLLP.

This sequence belongs to the Fmt family.

The enzyme catalyses L-methionyl-tRNA(fMet) + (6R)-10-formyltetrahydrofolate = N-formyl-L-methionyl-tRNA(fMet) + (6S)-5,6,7,8-tetrahydrofolate + H(+). Functionally, attaches a formyl group to the free amino group of methionyl-tRNA(fMet). The formyl group appears to play a dual role in the initiator identity of N-formylmethionyl-tRNA by promoting its recognition by IF2 and preventing the misappropriation of this tRNA by the elongation apparatus. This Prochlorococcus marinus (strain SARG / CCMP1375 / SS120) protein is Methionyl-tRNA formyltransferase.